Here is a 320-residue protein sequence, read N- to C-terminus: Apolipoprotein E (320 aa).

Positions 1–18 (MKVLWAALLVAFLAGCQG) are cleaved as a signal peptide. A run of 8 repeats spans residues 82–103 (ALMD…EQLS), 104–125 (PVAE…ARLG), 126–147 (ADME…AMLG), 148–169 (QSTE…KRLL), 170–191 (RDVD…EGAE), 192–213 (RGVS…ARAA), 214–236 (TVGS…ERLR), and 237–258 (ARME…EQVE). Residues 82-258 (ALMDETMKEL…RLDEVKEQVE (177 aa)) are 8 X 22 AA approximate tandem repeats. Position 145 is a methionine sulfoxide (M145). Phosphoserine is present on S149. Residues 160–170 (HLRKLRKRLLR) are LDL and other lipoprotein receptors binding. 164-167 (LRKR) is a heparin binding site. Residues 212 to 293 (AATVGSSLAG…SWFEPLVEDM (82 aa)) are lipid-binding and lipoprotein association. 232-239 (GERLRARM) contributes to the heparin binding site. Residues 269-320 (QQMRLQAEAFQARLKSWFEPLVEDMQRQWAGLVEKVQAAVGASAAPVPSDNH) form a homooligomerization region. The interval 281–293 (RLKSWFEPLVEDM) is specificity for association with VLDL.

Belongs to the apolipoprotein A1/A4/E family. As to quaternary structure, homotetramer. May interact with ABCA1; functionally associated with ABCA1 in the biogenesis of HDLs. May interact with APP/A4 amyloid-beta peptide; the interaction is extremely stable in vitro but its physiological significance is unclear. May interact with MAPT. May interact with MAP2. In the cerebrospinal fluid, interacts with secreted SORL1. Interacts with PMEL; this allows the loading of PMEL luminal fragment on ILVs to induce fibril nucleation. Post-translationally, APOE exists as multiple glycosylated and sialylated glycoforms within cells and in plasma. The extent of glycosylation and sialylation are tissue and context specific. In terms of processing, glycated in plasma VLDL. Phosphorylated by FAM20C in the extracellular medium.

It is found in the secreted. The protein localises to the extracellular space. The protein resides in the extracellular matrix. It localises to the extracellular vesicle. Its subcellular location is the endosome. It is found in the multivesicular body. APOE is an apolipoprotein, a protein associating with lipid particles, that mainly functions in lipoprotein-mediated lipid transport between organs via the plasma and interstitial fluids. APOE is a core component of plasma lipoproteins and is involved in their production, conversion and clearance. Apolipoproteins are amphipathic molecules that interact both with lipids of the lipoprotein particle core and the aqueous environment of the plasma. As such, APOE associates with chylomicrons, chylomicron remnants, very low density lipoproteins (VLDL) and intermediate density lipoproteins (IDL) but shows a preferential binding to high-density lipoproteins (HDL). It also binds a wide range of cellular receptors including the LDL receptor/LDLR, the LDL receptor-related proteins LRP1, LRP2 and LRP8 and the very low-density lipoprotein receptor/VLDLR that mediate the cellular uptake of the APOE-containing lipoprotein particles. Finally, APOE also has a heparin-binding activity and binds heparan-sulfate proteoglycans on the surface of cells, a property that supports the capture and the receptor-mediated uptake of APOE-containing lipoproteins by cells. A main function of APOE is to mediate lipoprotein clearance through the uptake of chylomicrons, VLDLs, and HDLs by hepatocytes. APOE is also involved in the biosynthesis by the liver of VLDLs as well as their uptake by peripheral tissues ensuring the delivery of triglycerides and energy storage in muscle, heart and adipose tissues. By participating in the lipoprotein-mediated distribution of lipids among tissues, APOE plays a critical role in plasma and tissues lipid homeostasis. APOE is also involved in two steps of reverse cholesterol transport, the HDLs-mediated transport of cholesterol from peripheral tissues to the liver, and thereby plays an important role in cholesterol homeostasis. First, it is functionally associated with ABCA1 in the biogenesis of HDLs in tissues. Second, it is enriched in circulating HDLs and mediates their uptake by hepatocytes. APOE also plays an important role in lipid transport in the central nervous system, regulating neuron survival and sprouting. This chain is Apolipoprotein E (APOE), found in Plecturocebus moloch (Dusky titi monkey).